Here is a 243-residue protein sequence, read N- to C-terminus: MNSSQDNLFAKPYEHVSDFQFDDKVAGVFNDMIRRSVPGYGQIINTIGDLAQKYATPNSKIYDLGCSLGAATLSIRRRVEGRNCQIIAIDNSESMIERCNENLSAYVSETPVELVCGDIRDIKIENASLVVLNFTMQFLAPSDRESLLKNIYQGLVPGGLLVLSEKLYFKEDNIQTTLDDLHLDFKRANGYSELEISQKRSSLENVMKPDTLVEHENRIRAQGFSQFSVWFQCFNFASMVAIK.

S-adenosyl-L-methionine-binding positions include Tyr-40, Gly-65 to Ser-67, Asp-90 to Asn-91, Asp-118 to Ile-119, Asn-133, and Arg-200.

This sequence belongs to the class I-like SAM-binding methyltransferase superfamily. Cx-SAM synthase family. Homodimer.

It carries out the reaction prephenate + S-adenosyl-L-methionine = carboxy-S-adenosyl-L-methionine + 3-phenylpyruvate + H2O. Functionally, catalyzes the conversion of S-adenosyl-L-methionine (SAM) to carboxy-S-adenosyl-L-methionine (Cx-SAM). This chain is Carboxy-S-adenosyl-L-methionine synthase, found in Shewanella pealeana (strain ATCC 700345 / ANG-SQ1).